The chain runs to 330 residues: 4-hydroxythreonine-4-phosphate dehydrogenase (330 aa).

Substrate is bound by residues H135 and T136. Positions 165, 210, and 266 each coordinate a divalent metal cation. 3 residues coordinate substrate: K274, N283, and R292.

Belongs to the PdxA family. In terms of assembly, homodimer. Zn(2+) is required as a cofactor. The cofactor is Mg(2+). It depends on Co(2+) as a cofactor.

The protein localises to the cytoplasm. The enzyme catalyses 4-(phosphooxy)-L-threonine + NAD(+) = 3-amino-2-oxopropyl phosphate + CO2 + NADH. It participates in cofactor biosynthesis; pyridoxine 5'-phosphate biosynthesis; pyridoxine 5'-phosphate from D-erythrose 4-phosphate: step 4/5. Functionally, catalyzes the NAD(P)-dependent oxidation of 4-(phosphooxy)-L-threonine (HTP) into 2-amino-3-oxo-4-(phosphooxy)butyric acid which spontaneously decarboxylates to form 3-amino-2-oxopropyl phosphate (AHAP). This Vibrio cholerae serotype O1 (strain ATCC 39315 / El Tor Inaba N16961) protein is 4-hydroxythreonine-4-phosphate dehydrogenase.